The following is a 170-amino-acid chain: Brassinosteroid-responsive RING protein 1 (170 aa).

The helical transmembrane segment at 15-37 (LFVQTLSILGFIRTIVFSIFRFL) threads the bilayer. The segment at 94–137 (CAVCLYEFEGEQEIRWLRNCRHIFHRSCLDRWMDHDQKTCPLCR) adopts an RING-type; atypical zinc-finger fold.

This sequence belongs to the RING-type zinc finger family. Highly expressed in stems, rosette leaves and siliques, and moderately expressed in roots, cauline leaves and flower. Detected at low levels in seeds.

The protein resides in the membrane. Functionally, may be involved in the brassinosteroids (BRs) signaling pathway and regulate the growth and development of rosette leaves. Seems to prevent over development of leaves and inflorescence stems. The protein is Brassinosteroid-responsive RING protein 1 of Arabidopsis thaliana (Mouse-ear cress).